Reading from the N-terminus, the 315-residue chain is Probable cytosolic iron-sulfur protein assembly protein CIAO1 homolog (315 aa).

WD repeat units lie at residues 11-50 (GHED…WVCK), 56-95 (GHQR…FESC), 100-139 (GHEN…EFEC), 145-188 (CHSQ…CTLD), 189-229 (KHAS…RSWE), 236-275 (RHPR…CSWR), and 283-315 (AHSQ…WQID).

Belongs to the WD repeat CIA1 family.

Functionally, essential component of the cytosolic iron-sulfur (Fe/S) protein assembly machinery. Required for the maturation of extramitochondrial Fe/S proteins. This is Probable cytosolic iron-sulfur protein assembly protein CIAO1 homolog from Ixodes scapularis (Black-legged tick).